Here is a 417-residue protein sequence, read N- to C-terminus: C6 finger transcription factor traC (417 aa).

The tract at residues 1–40 is disordered; that stretch reads MNFSEQFTGRSEPGRKANRTSNNNTNSTTNVATVTTDDSN. Residues 19-37 are compositionally biased toward low complexity; sequence RTSNNNTNSTTNVATVTTD. Positions 44–73 form a DNA-binding region, zn(2)-C6 fungal-type; it reads CDRCKGQKLRCIWENGSNTCRRCTRARAVC. Disordered regions lie at residues 75–94 and 104–128; these read QPRPRPFGRPRCSTKSKHHV and WVSSTTQQPQENDAEMPMATSDDHD. Residues 80–94 show a composition bias toward basic residues; sequence PFGRPRCSTKSKHHV. The span at 104 to 114 shows a compositional bias: polar residues; the sequence is WVSSTTQQPQE.

The protein localises to the nucleus. In terms of biological role, C6 finger transcription factor; part of the tra gene cluster that produces terrestric acid. The clavatol biosynthesis cluster cla and the terrestric acid cluster tra are both involved in the production of peniphenones and penilactones. The chain is C6 finger transcription factor traC from Penicillium crustosum (Blue mold fungus).